Reading from the N-terminus, the 149-residue chain is Internal scaffolding protein ORF3 (149 aa).

The protein belongs to the microvidae B protein family.

The protein localises to the host cytoplasm. Functionally, participates in the assembly of the viral procapsid in the cytoplasm. Released from the procapsid upon genome packaging, possibly through affinity displacement by the protein ORF8, or by proteolysis. The chain is Internal scaffolding protein ORF3 from Spiroplasma virus 4 (SpV4).